The following is a 146-amino-acid chain: Flagellar assembly factor FliW 1 (146 aa).

It belongs to the FliW family. Interacts with translational regulator CsrA and flagellin(s).

Its subcellular location is the cytoplasm. Its function is as follows. Acts as an anti-CsrA protein, binds CsrA and prevents it from repressing translation of its target genes, one of which is flagellin. Binds to flagellin and participates in the assembly of the flagellum. The sequence is that of Flagellar assembly factor FliW 1 from Helicobacter hepaticus (strain ATCC 51449 / 3B1).